The chain runs to 301 residues: Hydroxymycolate synthase MmaA4 (301 aa).

Residues 42–43 (YS), 81–83 (GCG), 103–108 (TLSKNQ), 132–133 (WE), and I145 contribute to the S-adenosyl-L-methionine site. C278 is a catalytic residue.

The protein belongs to the CFA/CMAS family. In terms of assembly, monomer.

The protein operates within lipid metabolism; mycolic acid biosynthesis. Its activity is regulated as follows. Inhibited by S-adenosyl-N-decyl-aminoethyl (SADAE). Involved in the biosynthesis of hydroxymycolate, a common precursor of oxygenated mycolic acids (methoxy-mycolate and keto-mycolate). Probably transfers a methyl group from the S-adenosylmethionine (SAM) cofactor and, subsequently or simultaneously, a water molecule onto the double bound of ethylene substrates, leading to the formation of the hydroxylated product at the distal position. Involved in the activation of the antitubercular drug thiacetazone (TAC). The polypeptide is Hydroxymycolate synthase MmaA4 (mmaA4) (Mycobacterium tuberculosis (strain ATCC 25618 / H37Rv)).